Reading from the N-terminus, the 271-residue chain is Aliphatic sulfonates import ATP-binding protein SsuB (271 aa).

The ABC transporter domain maps to 13–234 (ITLESIGKRY…RKGSAKLAAL (222 aa)). 45-52 (GRSGCGKS) contacts ATP. The interval 250–271 (EASRQGIKASRQGTATSRRVAN) is disordered. Residues 260 to 271 (RQGTATSRRVAN) are compositionally biased toward polar residues.

It belongs to the ABC transporter superfamily. Aliphatic sulfonates importer (TC 3.A.1.17.2) family. In terms of assembly, the complex is composed of two ATP-binding proteins (SsuB), two transmembrane proteins (SsuC) and a solute-binding protein (SsuA).

It localises to the cell inner membrane. It catalyses the reaction ATP + H2O + aliphatic sulfonate-[sulfonate-binding protein]Side 1 = ADP + phosphate + aliphatic sulfonateSide 2 + [sulfonate-binding protein]Side 1.. Its function is as follows. Part of the ABC transporter complex SsuABC involved in aliphatic sulfonates import. Responsible for energy coupling to the transport system. The polypeptide is Aliphatic sulfonates import ATP-binding protein SsuB (Yersinia pestis bv. Antiqua (strain Antiqua)).